Here is a 68-residue protein sequence, read N- to C-terminus: Alpha-conotoxin Lp1.1 (68 aa).

The first 21 residues, 1–21, serve as a signal peptide directing secretion; it reads MGMRMMFIMFMLVVLATTVVT. A propeptide spanning residues 22–48 is cleaved from the precursor; sequence FTSDRALDAMNAAASNKASRLIALAVR. 2 disulfide bridges follow: Cys50–Cys56 and Cys51–Cys64. The interval 52–54 is lacks the Ser-Xaa-Pro motif that is crucial for potent interaction with nAChR; that stretch reads ARA. Position 65 is a glycine amide (Gly65). The propeptide occupies 66–68; sequence GGR.

Belongs to the conotoxin A superfamily. In terms of tissue distribution, expressed by the venom duct.

The protein localises to the secreted. In terms of biological role, alpha-conotoxins act on postsynaptic membranes, they bind to the nicotinic acetylcholine receptors (nAChR) and thus inhibit them. Synthetic peptide inhibits alpha-6/alpha-3/beta-2 and alpha-3/beta-2 nicotinic acetylcholine receptors and causes uncoordinated movement when intramuscularly injected into goldfish. Has a distinct nAChR binding mode from other alpha-conotoxins, due to a different three residue motif (Ala-Xaa-Ala instead of the conserved Ser-Xaa-Pro motif). The chain is Alpha-conotoxin Lp1.1 from Conus leopardus (Leopard cone).